The chain runs to 254 residues: Enolase-phosphatase E1 (254 aa).

2 residues coordinate Mg(2+): D13 and E15. Residues 127–128 and K173 each bind substrate; that span reads SS. D200 lines the Mg(2+) pocket.

It belongs to the HAD-like hydrolase superfamily. MasA/MtnC family. As to quaternary structure, monomer. Requires Mg(2+) as cofactor.

It is found in the cytoplasm. It localises to the nucleus. The catalysed reaction is 5-methylsulfanyl-2,3-dioxopentyl phosphate + H2O = 1,2-dihydroxy-5-(methylsulfanyl)pent-1-en-3-one + phosphate. The protein operates within amino-acid biosynthesis; L-methionine biosynthesis via salvage pathway; L-methionine from S-methyl-5-thio-alpha-D-ribose 1-phosphate: step 3/6. Its pathway is amino-acid biosynthesis; L-methionine biosynthesis via salvage pathway; L-methionine from S-methyl-5-thio-alpha-D-ribose 1-phosphate: step 4/6. Its function is as follows. Bifunctional enzyme that catalyzes the enolization of 2,3-diketo-5-methylthiopentyl-1-phosphate (DK-MTP-1-P) into the intermediate 2-hydroxy-3-keto-5-methylthiopentenyl-1-phosphate (HK-MTPenyl-1-P), which is then dephosphorylated to form the acireductone 1,2-dihydroxy-3-keto-5-methylthiopentene (DHK-MTPene). This Sclerotinia sclerotiorum (strain ATCC 18683 / 1980 / Ss-1) (White mold) protein is Enolase-phosphatase E1 (utr4).